A 745-amino-acid chain; its full sequence is Poly(A) polymerase alpha (745 aa).

A compositionally biased stretch (low complexity) spans 1 to 17; the sequence is MPFPVTTQGSQQTQPPQ. The disordered stretch occupies residues 1-22; that stretch reads MPFPVTTQGSQQTQPPQKHYGI. A phosphoserine mark is found at Ser10 and Ser24. Residues 100–102, Thr109, 113–115, Asp167, Lys228, Tyr237, and 246–247 each bind ATP; these read FGS, DID, and GV. Mg(2+) is bound by residues Asp113, Asp115, and Asp167. Glycyl lysine isopeptide (Lys-Gly) (interchain with G-Cter in SUMO) cross-links involve residues Lys444, Lys445, Lys506, and Lys507. The Nuclear localization signal 1 motif lies at 490-507; that stretch reads RKQLHQLLPNHVLQKKKK. Residues 508–643 form a ser/Thr-rich region; the sequence is HSTEGVKLTA…TSGNAATKIP (136 aa). The span at 523–534 shows a compositional bias: low complexity; it reads LDLSMDSDNSMS. 2 disordered regions span residues 523–565 and 577–704; these read LDLS…AVTA and SVPQ…SETI. A compositionally biased stretch (polar residues) spans 535-557; it reads VPSPTSATKTSPLNSSGSSQGRN. Ser537 and Ser558 each carry phosphoserine. Composition is skewed to low complexity over residues 583–594 and 611–640; these read SSESSGGTSSES and TVSRVVSSTRLVNPPPRSSGNAATSGNAAT. Residues Lys641 and Lys650 each carry the N6-acetyllysine modification. The Nuclear localization signal 2 signature appears at 650-665; it reads KRTSSPHKEESPKKTK. Basic and acidic residues-rich tracts occupy residues 655–666 and 682–692; these read PHKEESPKKTKT and GHDKTEAKEQL. The tract at residues 677–745 is required for interaction with NUDT21; that stretch reads CLALSGHDKT…KNSIKLRLNR (69 aa). The segment covering 694–704 has biased composition (low complexity); sequence TETSTTQSETI. Lys736 carries the post-translational modification N6-acetyllysine; alternate. A Glycyl lysine isopeptide (Lys-Gly) (interchain with G-Cter in SUMO); alternate cross-link involves residue Lys736. At Ser738 the chain carries Phosphoserine. Lys740 is subject to N6-acetyllysine; alternate. Lys740 is covalently cross-linked (Glycyl lysine isopeptide (Lys-Gly) (interchain with G-Cter in SUMO); alternate).

Belongs to the poly(A) polymerase family. As to quaternary structure, monomer. Found in a complex with CPSF1, FIP1L1 and PAPOLA. Interacts with AHCYL1 and FIP1L1; the interaction with AHCYL1 seems to increase interaction with FIP1L1. Interacts with NUDT21; the interaction is diminished by acetylation. Interacts with KPNB1; the interaction promotes PAP nuclear import and is inhibited by acetylation of PAP. Mg(2+) serves as cofactor. It depends on Mn(2+) as a cofactor. Post-translationally, polysumoylated. Varying sumoylation depending on tissue- and cell-type. Highly sumoylated in bladder and NIH 3T3 cells. Sumoylation is required for nuclear localization and enhances PAP stability. Desumoylated by SENP1. Inhibits polymerase activity. In terms of processing, hyperphosphorylation on multiple CDK2 consensus and non-consensus sites in the C-terminal Ser/Thr-rich region represses PAP activity in late M-phase. Phosphorylation/dephosphorylation may regulate the interaction between PAP and CPSF. Acetylated in the C-terminus. Acetylation decreases interaction with NUDT21 and KPNB1, and inhibits nuclear localization through inhibiting binding to the importin alpha/beta complex.

It is found in the cytoplasm. The protein resides in the nucleus. It catalyses the reaction RNA(n) + ATP = RNA(n)-3'-adenine ribonucleotide + diphosphate. Its function is as follows. Polymerase that creates the 3'-poly(A) tail of mRNA's. Also required for the endoribonucleolytic cleavage reaction at some polyadenylation sites. May acquire specificity through interaction with a cleavage and polyadenylation specificity factor (CPSF) at its C-terminus. In Homo sapiens (Human), this protein is Poly(A) polymerase alpha (PAPOLA).